A 456-amino-acid polypeptide reads, in one-letter code: Bifunctional protein GlmU (456 aa).

Residues 1–228 (MPQNTLNIVI…SHLAAGVNNK (228 aa)) form a pyrophosphorylase region. UDP-N-acetyl-alpha-D-glucosamine contacts are provided by residues 11-14 (LAAG), Lys-25, Gln-75, 80-81 (GT), 102-104 (YGD), Gly-138, Glu-153, Asn-168, and Asn-226. Residue Asp-104 coordinates Mg(2+). Asn-226 is a Mg(2+) binding site. A linker region spans residues 229 to 249 (LQLAELERIFQTGQAQELLKA). Residues 250-456 (GVTLHDPARF…GWVRPEKDKQ (207 aa)) form an N-acetyltransferase region. The UDP-N-acetyl-alpha-D-glucosamine site is built by Arg-332 and Lys-350. His-362 (proton acceptor) is an active-site residue. UDP-N-acetyl-alpha-D-glucosamine is bound by residues Tyr-365 and Asn-376. Residues Ala-379, 385–386 (NY), Ser-404, Ala-422, and Arg-439 contribute to the acetyl-CoA site.

It in the N-terminal section; belongs to the N-acetylglucosamine-1-phosphate uridyltransferase family. The protein in the C-terminal section; belongs to the transferase hexapeptide repeat family. Homotrimer. The cofactor is Mg(2+).

It localises to the cytoplasm. It carries out the reaction alpha-D-glucosamine 1-phosphate + acetyl-CoA = N-acetyl-alpha-D-glucosamine 1-phosphate + CoA + H(+). It catalyses the reaction N-acetyl-alpha-D-glucosamine 1-phosphate + UTP + H(+) = UDP-N-acetyl-alpha-D-glucosamine + diphosphate. Its pathway is nucleotide-sugar biosynthesis; UDP-N-acetyl-alpha-D-glucosamine biosynthesis; N-acetyl-alpha-D-glucosamine 1-phosphate from alpha-D-glucosamine 6-phosphate (route II): step 2/2. It functions in the pathway nucleotide-sugar biosynthesis; UDP-N-acetyl-alpha-D-glucosamine biosynthesis; UDP-N-acetyl-alpha-D-glucosamine from N-acetyl-alpha-D-glucosamine 1-phosphate: step 1/1. The protein operates within bacterial outer membrane biogenesis; LPS lipid A biosynthesis. In terms of biological role, catalyzes the last two sequential reactions in the de novo biosynthetic pathway for UDP-N-acetylglucosamine (UDP-GlcNAc). The C-terminal domain catalyzes the transfer of acetyl group from acetyl coenzyme A to glucosamine-1-phosphate (GlcN-1-P) to produce N-acetylglucosamine-1-phosphate (GlcNAc-1-P), which is converted into UDP-GlcNAc by the transfer of uridine 5-monophosphate (from uridine 5-triphosphate), a reaction catalyzed by the N-terminal domain. This is Bifunctional protein GlmU from Neisseria meningitidis serogroup C (strain 053442).